A 338-amino-acid chain; its full sequence is RNA 3'-terminal phosphate cyclase (338 aa).

ATP contacts are provided by residues Gln-103 and 283–287; that span reads YLADQ. Catalysis depends on His-308, which acts as the Tele-AMP-histidine intermediate.

This sequence belongs to the RNA 3'-terminal cyclase family. Type 1 subfamily.

The protein resides in the cytoplasm. The catalysed reaction is a 3'-end 3'-phospho-ribonucleotide-RNA + ATP = a 3'-end 2',3'-cyclophospho-ribonucleotide-RNA + AMP + diphosphate. In terms of biological role, catalyzes the conversion of 3'-phosphate to a 2',3'-cyclic phosphodiester at the end of RNA. The mechanism of action of the enzyme occurs in 3 steps: (A) adenylation of the enzyme by ATP; (B) transfer of adenylate to an RNA-N3'P to produce RNA-N3'PP5'A; (C) and attack of the adjacent 2'-hydroxyl on the 3'-phosphorus in the diester linkage to produce the cyclic end product. The biological role of this enzyme is unknown but it is likely to function in some aspects of cellular RNA processing. In Shigella sonnei (strain Ss046), this protein is RNA 3'-terminal phosphate cyclase.